The chain runs to 435 residues: Trigger factor (435 aa).

In terms of domain architecture, PPIase FKBP-type spans 162 to 247 (GDRVIIDFKG…VKNVAEATLP (86 aa)).

It belongs to the FKBP-type PPIase family. Tig subfamily.

Its subcellular location is the cytoplasm. The enzyme catalyses [protein]-peptidylproline (omega=180) = [protein]-peptidylproline (omega=0). Functionally, involved in protein export. Acts as a chaperone by maintaining the newly synthesized protein in an open conformation. Functions as a peptidyl-prolyl cis-trans isomerase. The sequence is that of Trigger factor from Chromobacterium violaceum (strain ATCC 12472 / DSM 30191 / JCM 1249 / CCUG 213 / NBRC 12614 / NCIMB 9131 / NCTC 9757 / MK).